We begin with the raw amino-acid sequence, 156 residues long: Small ribosomal subunit protein uS7 (156 aa).

It belongs to the universal ribosomal protein uS7 family. As to quaternary structure, part of the 30S ribosomal subunit. Contacts proteins S9 and S11.

One of the primary rRNA binding proteins, it binds directly to 16S rRNA where it nucleates assembly of the head domain of the 30S subunit. Is located at the subunit interface close to the decoding center, probably blocks exit of the E-site tRNA. In Deinococcus radiodurans (strain ATCC 13939 / DSM 20539 / JCM 16871 / CCUG 27074 / LMG 4051 / NBRC 15346 / NCIMB 9279 / VKM B-1422 / R1), this protein is Small ribosomal subunit protein uS7.